We begin with the raw amino-acid sequence, 599 residues long: ATP-dependent rRNA helicase SPB4 (599 aa).

The Q motif motif lies at 7–35 (WDTLDYTLQPWIRTAVDAMGYETMTPVQA). The Helicase ATP-binding domain maps to 38-224 (IPLFARNKDV…KTGMRNPVKV (187 aa)). Residue 51-58 (SVTGSGKT) participates in ATP binding. The DEAD box signature appears at 172–175 (DEAD). The region spanning 248 to 415 (KLQLLLTLLN…GLPEIIRAWI (168 aa)) is the Helicase C-terminal domain. The stretch at 501-561 (QREKARKLAK…LKRKAIEEKL (61 aa)) forms a coiled coil. The disordered stretch occupies residues 559 to 599 (EKLIENSDDSDNEVETDWKDIVRQRKKKKTNSGMQGDFGDL). The segment covering 564-573 (NSDDSDNEVE) has biased composition (acidic residues).

This sequence belongs to the DEAD box helicase family. DDX55/SPB4 subfamily. In terms of assembly, component of pre-60S ribosomal complexes.

It localises to the nucleus. The protein resides in the nucleolus. The enzyme catalyses ATP + H2O = ADP + phosphate + H(+). Functionally, ATP-binding RNA helicase involved in the biogenesis of 60S ribosomal subunits. Binds 90S pre-ribosomal particles and dissociates from pre-60S ribosomal particles after processing of 27SB pre-rRNA. Required for the normal formation of 18S rRNA through the processing of pre-rRNAs at sites A0, A1 and A2, and the normal formation of 25S and 5.8S rRNAs through the processing of pre-rRNAs at sites C1 and C2. The polypeptide is ATP-dependent rRNA helicase SPB4 (Eremothecium gossypii (strain ATCC 10895 / CBS 109.51 / FGSC 9923 / NRRL Y-1056) (Yeast)).